Here is a 196-residue protein sequence, read N- to C-terminus: Regulator of G-protein signaling 1 (196 aa).

The disordered stretch occupies residues 1-27 (MPGMFFSANPKDLKGTDQSLLDDKTQK). Over residues 11-25 (KDLKGTDQSLLDDKT) the composition is skewed to basic and acidic residues. Residues 72-187 (SLEKLLANQT…LKSNIYLNLL (116 aa)) enclose the RGS domain.

In terms of assembly, interacts with GNAI1 and GNAQ.

Its subcellular location is the cell membrane. The protein localises to the cytoplasm. It localises to the cytosol. Its function is as follows. Regulates G protein-coupled receptor signaling cascades, including signaling downstream of the N-formylpeptide chemoattractant receptors and leukotriene receptors. Inhibits B cell chemotaxis toward CXCL12. Inhibits signal transduction by increasing the GTPase activity of G protein alpha subunits, thereby driving them into their inactive GDP-bound form. This is Regulator of G-protein signaling 1 (RGS1) from Equus caballus (Horse).